The chain runs to 498 residues: ATP synthase subunit beta, chloroplastic (498 aa).

172-179 (GGAGVGKT) is a binding site for ATP.

The protein belongs to the ATPase alpha/beta chains family. In terms of assembly, F-type ATPases have 2 components, CF(1) - the catalytic core - and CF(0) - the membrane proton channel. CF(1) has five subunits: alpha(3), beta(3), gamma(1), delta(1), epsilon(1). CF(0) has four main subunits: a(1), b(1), b'(1) and c(9-12).

The protein resides in the plastid. Its subcellular location is the chloroplast thylakoid membrane. It catalyses the reaction ATP + H2O + 4 H(+)(in) = ADP + phosphate + 5 H(+)(out). Produces ATP from ADP in the presence of a proton gradient across the membrane. The catalytic sites are hosted primarily by the beta subunits. In Populus trichocarpa (Western balsam poplar), this protein is ATP synthase subunit beta, chloroplastic.